A 124-amino-acid polypeptide reads, in one-letter code: Large ribosomal subunit protein uL22 (124 aa).

The protein belongs to the universal ribosomal protein uL22 family. In terms of assembly, part of the 50S ribosomal subunit.

In terms of biological role, this protein binds specifically to 23S rRNA; its binding is stimulated by other ribosomal proteins, e.g. L4, L17, and L20. It is important during the early stages of 50S assembly. It makes multiple contacts with different domains of the 23S rRNA in the assembled 50S subunit and ribosome. Its function is as follows. The globular domain of the protein is located near the polypeptide exit tunnel on the outside of the subunit, while an extended beta-hairpin is found that lines the wall of the exit tunnel in the center of the 70S ribosome. This is Large ribosomal subunit protein uL22 from Synechococcus sp. (strain JA-2-3B'a(2-13)) (Cyanobacteria bacterium Yellowstone B-Prime).